The chain runs to 524 residues: M phase phosphoprotein 10 (524 aa).

Positions Val-85–Pro-92 match the Nuclear localization signal 1 motif. Disordered regions lie at residues Lys-100–Lys-243 and Lys-259–Glu-283. Positions Asp-109–Gly-168 are enriched in acidic residues. Residues Ile-131 to Asp-165 are a coiled coil. Positions Ile-169–Glu-180 are enriched in basic and acidic residues. The segment covering Glu-181 to Tyr-191 has biased composition (acidic residues). Residues Lys-196–Gln-207 show a composition bias toward basic residues. Positions Ser-210 to Thr-238 are enriched in acidic residues. Positions Lys-257–Asp-302 form a coiled coil. Positions Ile-271–Glu-283 are enriched in basic and acidic residues. A Nuclear localization signal 2 motif is present at residues Gly-373–Leu-380. The segment at Lys-479–Pro-524 is disordered. Over residues Gly-480–Arg-493 the composition is skewed to basic and acidic residues. A compositionally biased stretch (basic residues) spans Lys-494 to Phe-504. Residues Lys-505 to Leu-517 show a composition bias toward basic and acidic residues.

This sequence belongs to the MPP10 family. As to quaternary structure, component of the ribosomal small subunit (SSU) processome. Interacts with THAL in the nucleus.

Its subcellular location is the nucleus. It is found in the nucleolus. Its function is as follows. Involved in nucleolar processing of pre-18S ribosomal RNA. This is M phase phosphoprotein 10 from Arabidopsis thaliana (Mouse-ear cress).